Consider the following 190-residue polypeptide: ATP synthase subunit delta (190 aa).

This sequence belongs to the ATPase delta chain family. In terms of assembly, F-type ATPases have 2 components, F(1) - the catalytic core - and F(0) - the membrane proton channel. F(1) has five subunits: alpha(3), beta(3), gamma(1), delta(1), epsilon(1). F(0) has three main subunits: a(1), b(2) and c(10-14). The alpha and beta chains form an alternating ring which encloses part of the gamma chain. F(1) is attached to F(0) by a central stalk formed by the gamma and epsilon chains, while a peripheral stalk is formed by the delta and b chains.

The protein resides in the cell inner membrane. F(1)F(0) ATP synthase produces ATP from ADP in the presence of a proton or sodium gradient. F-type ATPases consist of two structural domains, F(1) containing the extramembraneous catalytic core and F(0) containing the membrane proton channel, linked together by a central stalk and a peripheral stalk. During catalysis, ATP synthesis in the catalytic domain of F(1) is coupled via a rotary mechanism of the central stalk subunits to proton translocation. In terms of biological role, this protein is part of the stalk that links CF(0) to CF(1). It either transmits conformational changes from CF(0) to CF(1) or is implicated in proton conduction. This chain is ATP synthase subunit delta, found in Beijerinckia indica subsp. indica (strain ATCC 9039 / DSM 1715 / NCIMB 8712).